We begin with the raw amino-acid sequence, 1434 residues long: Probable ATP-dependent DNA helicase HFM1 (1434 aa).

Residues 289 to 476 (DDLLYTDRNF…WLSDGERPAV (188 aa)) enclose the Helicase ATP-binding domain. 302-309 (APTGSGKT) lines the ATP pocket. A DEAH box motif is present at residues 410–413 (DEVH). A Helicase C-terminal domain is found at 514–718 (KVYSVIRTYS…DVNIALDWIR (205 aa)). The 315-residue stretch at 775–1089 (PTEAGRLMAW…VGLDIHQKFT (315 aa)) folds into the SEC63 domain. Positions 1110–1130 (TDISHSDYSGRATATGSSKGM) are disordered. The C4-type zinc-finger motif lies at 1141–1156 (CHHHCKNKHACGHDCC). A disordered region spans residues 1294–1333 (GFGDTRDSSLGGSKLPFQKSSSRFQRDNSNSFASSPGKPD). Residues 1311–1327 (QKSSSRFQRDNSNSFAS) show a composition bias toward polar residues.

Belongs to the helicase family. SKI2 subfamily. It depends on Zn(2+) as a cofactor.

It catalyses the reaction Couples ATP hydrolysis with the unwinding of duplex DNA by translocating in the 3'-5' direction.. The enzyme catalyses ATP + H2O = ADP + phosphate + H(+). Required for crossover formation and complete synapsis of homologous chromosomes during meiosis. The protein is Probable ATP-dependent DNA helicase HFM1 of Mus musculus (Mouse).